A 135-amino-acid polypeptide reads, in one-letter code: Probable histone H2A.8 (135 aa).

It belongs to the histone H2A family. In terms of assembly, the nucleosome is a histone octamer containing two molecules each of H2A, H2B, H3 and H4 assembled in one H3-H4 heterotetramer and two H2A-H2B heterodimers. The octamer wraps approximately 147 bp of DNA.

The protein localises to the nucleus. Its subcellular location is the chromosome. Core component of nucleosome. Nucleosomes wrap and compact DNA into chromatin, limiting DNA accessibility to the cellular machineries which require DNA as a template. Histones thereby play a central role in transcription regulation, DNA repair, DNA replication and chromosomal stability. DNA accessibility is regulated via a complex set of post-translational modifications of histones, also called histone code, and nucleosome remodeling. This Oryza sativa subsp. indica (Rice) protein is Probable histone H2A.8.